Consider the following 192-residue polypeptide: Adenylate kinase (192 aa).

Gly12–Thr17 contributes to the ATP binding site. Residues Ser34 to Val63 are NMP. AMP-binding positions include Thr35, Arg40, Asn61 to Val63, Gly88 to Arg91, and Gln95. Positions Gly130–Asp136 are LID. Arg131 contacts ATP. AMP contacts are provided by Arg133 and Arg145. Arg173 is an ATP binding site.

It belongs to the adenylate kinase family. Monomer.

The protein resides in the cytoplasm. It catalyses the reaction AMP + ATP = 2 ADP. It functions in the pathway purine metabolism; AMP biosynthesis via salvage pathway; AMP from ADP: step 1/1. Its function is as follows. Catalyzes the reversible transfer of the terminal phosphate group between ATP and AMP. Plays an important role in cellular energy homeostasis and in adenine nucleotide metabolism. In Campylobacter jejuni subsp. jejuni serotype O:6 (strain 81116 / NCTC 11828), this protein is Adenylate kinase.